We begin with the raw amino-acid sequence, 1330 residues long: G2/mitotic-specific cyclin-B3 (1330 aa).

A disordered region spans residues 1–50 (MPLPLPSRSSKPETKKSRSSKIVPSGNNGQSEKRGENYQEKISSSSPRRL). Polar residues predominate over residues 20 to 30 (SKIVPSGNNGQ). A D-box motif is present at residues 54-62 (RSAFEDLTN). The tract at residues 1002–1059 (VETSSRVPSTPPESRAGMSSVGKLSTTSKSSVCESSSNKPSSSWGESSQKEMTPLEDI) is disordered. Positions 1026-1048 (STTSKSSVCESSSNKPSSSWGES) are enriched in low complexity.

Belongs to the cyclin family. Cyclin AB subfamily. In terms of assembly, interacts with CDK2 kinase. Post-translationally, ubiquitinated. Ubiquitination leads to its degradation during anaphase entry, after degradation of CCNB1.

The protein localises to the nucleus. Its function is as follows. Cyclins are positive regulatory subunits of the cyclin-dependent kinases (CDKs), and thereby play an essential role in the control of the cell cycle, notably via their destruction during cell division. Its tissue specificity suggest that it may be required during early meiotic prophase I. This chain is G2/mitotic-specific cyclin-B3 (CCNB3), found in Canis lupus familiaris (Dog).